The sequence spans 450 residues: Ig mu chain C region (450 aa).

This chain is Ig mu chain C region, found in Canis lupus familiaris (Dog).